A 448-amino-acid chain; its full sequence is MIILTLNCGSSSVKYQVYNWTERAVIAVGVVERVTQAGSVITHEVHGRENHVRESPCPTHTEAVQLIISTLTDAHVGVISDMSLIKAVGHRVLHAADRFVKSVVVTPDVLETFRSVQDLGPLHNPANIRGIEAAQAVIPSVPHCAIMDTAWHQTMPEASFMYAVPRQWYEEYAVRRYGFHGTSFLYTAKRASVILKKRAEDTNIIIAHIGNGASMCCVKNGVSFDTSMGITPLEGLIMGTRCGDCDPALAFYIMRKTGMSVSDIDTTLNKQSGLLGITGKYVDRRDVCAAMKNGDALARLAFDMEVHRIRKYFGAYVAALGKQPDALVFTAGVGEMCCDVRAAACAGLEHLGIRLDARKNELARTRNAETEISTDDSPVRILVIPTDEELVMTEDTYALMQGTYDVHTRFTYSFQDPTYVNKARAAGLKRDLEKNPALATIVVPRLDT.

N7 is a binding site for Mg(2+). K14 provides a ligand contact to ATP. Position 91 (R91) interacts with substrate. The active-site Proton donor/acceptor is D148. ATP is bound by residues 208–212 (HIGNG) and 283–285 (DRR). Position 388 (E388) interacts with Mg(2+).

The protein belongs to the acetokinase family. Homodimer. Requires Mg(2+) as cofactor. Mn(2+) is required as a cofactor.

It is found in the cytoplasm. It carries out the reaction acetate + ATP = acetyl phosphate + ADP. It functions in the pathway metabolic intermediate biosynthesis; acetyl-CoA biosynthesis; acetyl-CoA from acetate: step 1/2. Its function is as follows. Catalyzes the formation of acetyl phosphate from acetate and ATP. Can also catalyze the reverse reaction. The chain is Acetate kinase from Treponema pallidum (strain Nichols).